The sequence spans 140 residues: ATP synthase epsilon chain (140 aa).

It belongs to the ATPase epsilon chain family. F-type ATPases have 2 components, CF(1) - the catalytic core - and CF(0) - the membrane proton channel. CF(1) has five subunits: alpha(3), beta(3), gamma(1), delta(1), epsilon(1). CF(0) has three main subunits: a, b and c.

It localises to the cell membrane. Its function is as follows. Produces ATP from ADP in the presence of a proton gradient across the membrane. This is ATP synthase epsilon chain from Dehalococcoides mccartyi (strain ATCC BAA-2100 / JCM 16839 / KCTC 5957 / BAV1).